Consider the following 364-residue polypeptide: 3-dehydroquinate synthase (364 aa).

NAD(+) contacts are provided by residues 105 to 109 (GVVGD), 129 to 130 (TT), K142, and K151. Zn(2+)-binding residues include E184, H247, and H264.

This sequence belongs to the sugar phosphate cyclases superfamily. Dehydroquinate synthase family. Co(2+) is required as a cofactor. The cofactor is Zn(2+). NAD(+) serves as cofactor.

The protein resides in the cytoplasm. The catalysed reaction is 7-phospho-2-dehydro-3-deoxy-D-arabino-heptonate = 3-dehydroquinate + phosphate. It functions in the pathway metabolic intermediate biosynthesis; chorismate biosynthesis; chorismate from D-erythrose 4-phosphate and phosphoenolpyruvate: step 2/7. Catalyzes the conversion of 3-deoxy-D-arabino-heptulosonate 7-phosphate (DAHP) to dehydroquinate (DHQ). This chain is 3-dehydroquinate synthase, found in Acidithiobacillus ferrooxidans (strain ATCC 23270 / DSM 14882 / CIP 104768 / NCIMB 8455) (Ferrobacillus ferrooxidans (strain ATCC 23270)).